The primary structure comprises 208 residues: N-(5'-phosphoribosyl)anthranilate isomerase (208 aa).

This sequence belongs to the TrpF family.

The catalysed reaction is N-(5-phospho-beta-D-ribosyl)anthranilate = 1-(2-carboxyphenylamino)-1-deoxy-D-ribulose 5-phosphate. It functions in the pathway amino-acid biosynthesis; L-tryptophan biosynthesis; L-tryptophan from chorismate: step 3/5. The chain is N-(5'-phosphoribosyl)anthranilate isomerase from Methanococcus vannielii (strain ATCC 35089 / DSM 1224 / JCM 13029 / OCM 148 / SB).